The sequence spans 406 residues: Phosphorylase b kinase gamma catalytic chain, liver/testis isoform (406 aa).

Residues 24–291 (YDPKDVIGRG…AEQALQHPFF (268 aa)) form the Protein kinase domain. Residues 30 to 38 (IGRGVSSVV) and lysine 53 contribute to the ATP site. Residue aspartate 153 is the Proton acceptor of the active site. The tract at residues 306 to 330 (QRFRVAVWTVLAAGRVALSTHRVRP) is calmodulin-binding (domain-N). A Phosphoserine modification is found at serine 345. The segment at 346–370 (VRHLIDNCAFRLYGHWVKKGEQQNR) is calmodulin-binding (domain-C).

This sequence belongs to the protein kinase superfamily. CAMK Ser/Thr protein kinase family. Hexadecamer of 4 heterotetramers, each composed of alpha, beta, gamma, and delta subunits. Alpha (PHKA1 or PHKA2) and beta (PHKB) are regulatory subunits, gamma (PHKG1 or PHKG2) is the catalytic subunit, and delta is calmodulin.

The enzyme catalyses 2 ATP + phosphorylase b = 2 ADP + phosphorylase a.. In terms of biological role, catalytic subunit of the phosphorylase b kinase (PHK), which mediates the neural and hormonal regulation of glycogen breakdown (glycogenolysis) by phosphorylating and thereby activating glycogen phosphorylase. May regulate glycogeneolysis in the testis. In vitro, phosphorylates PYGM. This Homo sapiens (Human) protein is Phosphorylase b kinase gamma catalytic chain, liver/testis isoform (PHKG2).